The sequence spans 460 residues: MGGKKKVHPKTRTAAFKASEPSEIVEAPHSFVIHRGLACPYITDLTLDFRRIMEPFTASNLREKRMNRIKDFVSLSSFFHVSHMGIFNKASTQLSFKVVRLPRGPSLTFKVHQFTLARDVISLSKKQMIDNDHFKHAPLVIMNNFSGDGKHLKLMATTFQNMFPSINLATVNIGTIRRCVLFSYNPDTKLVEMRHYSVQVVPVGLKRAVQKIVKGTVPNLGKCNEVVDFVTKDGYASESEAEDDEQSHVVLAQTLKSKGNLEDKKSSIKLHEIGPRLTMQLIKIEEGLLTGEVLYHDHVVKTEDEKETLRKLVEKKRKQKEQRKKEQAENRARNLKLKKDEKWAAKRAAEGRTDSDPEDDAEYYKEEVGEEPDEELFKMEAKSSRKRPSLGGGMKYKNKRAKLDTKDKNDKSERTDKYDRKDKFDRKDKKDKFDPKNRRAKFDPKNKRAKFDHRKSRKSK.

The 263-residue stretch at 28–290 (PHSFVIHRGL…LIKIEEGLLT (263 aa)) folds into the Brix domain. Phosphoserine occurs at positions 237 and 239. Residues 295–350 (YHDHVVKTEDEKETLRKLVEKKRKQKEQRKKEQAENRARNLKLKKDEKWAAKRAAE) are a coiled coil. Residues 315-460 (KKRKQKEQRK…FDHRKSRKSK (146 aa)) are disordered. Composition is skewed to basic and acidic residues over residues 323 to 355 (RKKE…RTDS) and 401 to 446 (AKLD…DPKN). T353 is subject to Phosphothreonine. S355 carries the phosphoserine modification. Over residues 447–460 (KRAKFDHRKSRKSK) the composition is skewed to basic residues.

It belongs to the PPAN family. In terms of tissue distribution, ubiquitous.

Required for initiation of larval growth and normal mitotic growth but is not absolutely required for general biosynthesis or DNA replication. Required for progression of normal oogenesis and maturation of some imaginal tissues into adult structures. In Drosophila melanogaster (Fruit fly), this protein is Protein Peter pan (ppan).